A 214-amino-acid chain; its full sequence is Small ribosomal subunit protein uS2 (214 aa).

It belongs to the universal ribosomal protein uS2 family.

The chain is Small ribosomal subunit protein uS2 from Methanococcoides burtonii (strain DSM 6242 / NBRC 107633 / OCM 468 / ACE-M).